Here is an 85-residue protein sequence, read N- to C-terminus: Actobindin homolog (85 aa).

The WH2 domain occupies 35 to 52 (DRNELLSGIKEGKELKKA).

Is able to bind two actin monomers at high concentrations of G-actin. The polypeptide is Actobindin homolog (Entamoeba histolytica).